Consider the following 109-residue polypeptide: Mitochondrial import inner membrane translocase subunit TIM12 (109 aa).

Ser-2 carries the N-acetylserine modification. Positions 40 to 66 match the Twin CX3C motif motif; it reads CLEKCIPHEGFGEPDLTKGEQCCIDRC. 2 disulfide bridges follow: Cys-40–Cys-66 and Cys-44–Cys-62.

It belongs to the small Tim family. As to quaternary structure, component of the TIM22 complex, whose core is composed of TIM18, TIM22 and TIM54, associated with the peripheral proteins MRS5/TIM12 and the 70 kDa heterohexamer composed of TIM9 and TIM10 (or TIM8 and TIM13). Interacts directly with both the TIM22 protein and the TIM9-TIM10 heterohexamer. Interacts with multi-pass transmembrane proteins in transit.

It localises to the mitochondrion inner membrane. Its subcellular location is the mitochondrion intermembrane space. Functionally, essential component of the TIM22 complex, a complex that mediates the import and insertion of multi-pass transmembrane proteins into the mitochondrial inner membrane. The TIM22 complex forms a twin-pore translocase that uses the membrane potential as external driving force. In the TIM22 complex, it acts as a docking point for the soluble TIM9-TIM10 heterohexamer that guides the target proteins in transit through the aqueous mitochondrial intermembrane space. The polypeptide is Mitochondrial import inner membrane translocase subunit TIM12 (TIM12) (Saccharomyces cerevisiae (strain ATCC 204508 / S288c) (Baker's yeast)).